The following is a 359-amino-acid chain: Chorismate synthase (359 aa).

Arg47 is an NADP(+) binding site. Residues 123-125 (RSS), Gly283, 298-302 (KPTSS), and Arg326 contribute to the FMN site.

It belongs to the chorismate synthase family. As to quaternary structure, homotetramer. FMNH2 is required as a cofactor.

The catalysed reaction is 5-O-(1-carboxyvinyl)-3-phosphoshikimate = chorismate + phosphate. The protein operates within metabolic intermediate biosynthesis; chorismate biosynthesis; chorismate from D-erythrose 4-phosphate and phosphoenolpyruvate: step 7/7. Catalyzes the anti-1,4-elimination of the C-3 phosphate and the C-6 proR hydrogen from 5-enolpyruvylshikimate-3-phosphate (EPSP) to yield chorismate, which is the branch point compound that serves as the starting substrate for the three terminal pathways of aromatic amino acid biosynthesis. This reaction introduces a second double bond into the aromatic ring system. The protein is Chorismate synthase of Chlamydia felis (strain Fe/C-56) (Chlamydophila felis).